The primary structure comprises 527 residues: Metal transporter Nramp6 (527 aa).

The next 12 helical transmembrane spans lie at 38–58, 71–91, 115–135, 143–163, 173–193, 221–241, 264–284, 321–341, 364–384, 385–405, 427–447, and 458–478; these read FFSY…PGNF, ELLW…SLAA, FMLW…EVIG, LFNI…LILL, LEFL…VELH, ISLL…ALVL, GLAL…SGAV, LFAI…TYAG, CLAI…GAGK, LIII…VPLL, TWII…SSFI, and VAIV…LAAI.

This sequence belongs to the NRAMP (TC 2.A.55) family. As to expression, expressed in the vascular bundles of shoots, cotyledons, young leaves, sepals and petals, at the top of the flower stem and in the style. Expressed in the peduncle of developing siliques as well as in the septum and the funiculi.

It is found in the endomembrane system. Probable intracellular cadmium (Cd) transporter that participates in the distribution or availability of Cd within the cell. This Arabidopsis thaliana (Mouse-ear cress) protein is Metal transporter Nramp6 (NRAMP6).